We begin with the raw amino-acid sequence, 274 residues long: Tryptophan synthase alpha chain (274 aa).

Catalysis depends on proton acceptor residues Glu49 and Asp60.

This sequence belongs to the TrpA family. As to quaternary structure, tetramer of two alpha and two beta chains.

It carries out the reaction (1S,2R)-1-C-(indol-3-yl)glycerol 3-phosphate + L-serine = D-glyceraldehyde 3-phosphate + L-tryptophan + H2O. It functions in the pathway amino-acid biosynthesis; L-tryptophan biosynthesis; L-tryptophan from chorismate: step 5/5. In terms of biological role, the alpha subunit is responsible for the aldol cleavage of indoleglycerol phosphate to indole and glyceraldehyde 3-phosphate. The chain is Tryptophan synthase alpha chain from Alkalilimnicola ehrlichii (strain ATCC BAA-1101 / DSM 17681 / MLHE-1).